We begin with the raw amino-acid sequence, 215 residues long: Thiamine-phosphate synthase (215 aa).

4-amino-2-methyl-5-(diphosphooxymethyl)pyrimidine-binding positions include 43 to 47 and asparagine 78; that span reads QFRDK. Residues aspartate 79 and aspartate 98 each coordinate Mg(2+). Serine 117 contacts 4-amino-2-methyl-5-(diphosphooxymethyl)pyrimidine. Residue 143–145 coordinates 2-[(2R,5Z)-2-carboxy-4-methylthiazol-5(2H)-ylidene]ethyl phosphate; the sequence is TNS. Residue lysine 146 participates in 4-amino-2-methyl-5-(diphosphooxymethyl)pyrimidine binding. 2-[(2R,5Z)-2-carboxy-4-methylthiazol-5(2H)-ylidene]ethyl phosphate contacts are provided by residues glycine 174 and 194–195; that span reads IS.

This sequence belongs to the thiamine-phosphate synthase family. It depends on Mg(2+) as a cofactor.

The catalysed reaction is 2-[(2R,5Z)-2-carboxy-4-methylthiazol-5(2H)-ylidene]ethyl phosphate + 4-amino-2-methyl-5-(diphosphooxymethyl)pyrimidine + 2 H(+) = thiamine phosphate + CO2 + diphosphate. It catalyses the reaction 2-(2-carboxy-4-methylthiazol-5-yl)ethyl phosphate + 4-amino-2-methyl-5-(diphosphooxymethyl)pyrimidine + 2 H(+) = thiamine phosphate + CO2 + diphosphate. It carries out the reaction 4-methyl-5-(2-phosphooxyethyl)-thiazole + 4-amino-2-methyl-5-(diphosphooxymethyl)pyrimidine + H(+) = thiamine phosphate + diphosphate. The protein operates within cofactor biosynthesis; thiamine diphosphate biosynthesis; thiamine phosphate from 4-amino-2-methyl-5-diphosphomethylpyrimidine and 4-methyl-5-(2-phosphoethyl)-thiazole: step 1/1. Its function is as follows. Condenses 4-methyl-5-(beta-hydroxyethyl)thiazole monophosphate (THZ-P) and 2-methyl-4-amino-5-hydroxymethyl pyrimidine pyrophosphate (HMP-PP) to form thiamine monophosphate (TMP). This chain is Thiamine-phosphate synthase, found in Lactococcus lactis subsp. lactis (strain IL1403) (Streptococcus lactis).